Here is a 267-residue protein sequence, read N- to C-terminus: Chaperone protein MyfB (267 aa).

A signal peptide spans 1–34 (MKYKFSHNFISYNLFLFVFMSLILLPYSHASSMG). An intrachain disulfide couples C127 to C164.

The protein belongs to the periplasmic pilus chaperone family.

The protein resides in the periplasm. Required for the biogenesis of the MyfA fimbria. The chain is Chaperone protein MyfB (myfB) from Yersinia enterocolitica.